The primary structure comprises 408 residues: Branched-chain amino acid aminotransferase 2, chloroplastic (408 aa).

The transit peptide at 1 to 58 (MDCAAALLPGFHPNYLLCPSRHFSSLLPKTDLSSPLKFQLQNKQLSLASSHGFSPVIC) directs the protein to the chloroplast. R152 lines the pyridoxal 5'-phosphate pocket. K254 serves as the catalytic Proton acceptor. The residue at position 254 (K254) is an N6-(pyridoxal phosphate)lysine. Residue E290 participates in pyridoxal 5'-phosphate binding.

The protein belongs to the class-IV pyridoxal-phosphate-dependent aminotransferase family. The cofactor is pyridoxal 5'-phosphate. Expressed in lupulin glands and leaves.

The protein localises to the plastid. Its subcellular location is the chloroplast. The enzyme catalyses L-isoleucine + 2-oxoglutarate = (S)-3-methyl-2-oxopentanoate + L-glutamate. The catalysed reaction is L-leucine + 2-oxoglutarate = 4-methyl-2-oxopentanoate + L-glutamate. It carries out the reaction L-valine + 2-oxoglutarate = 3-methyl-2-oxobutanoate + L-glutamate. Its pathway is amino-acid biosynthesis; L-isoleucine biosynthesis; L-isoleucine from 2-oxobutanoate: step 4/4. It functions in the pathway amino-acid biosynthesis; L-leucine biosynthesis; L-leucine from 3-methyl-2-oxobutanoate: step 4/4. It participates in amino-acid biosynthesis; L-valine biosynthesis; L-valine from pyruvate: step 4/4. Its function is as follows. Converts 2-oxo acids to branched-chain amino acids. Shows no kinetic preferences corresponding to anabolic or catabolic functions, but likely involved in BCAA biosynthesis. This Humulus lupulus (European hop) protein is Branched-chain amino acid aminotransferase 2, chloroplastic.